Reading from the N-terminus, the 481-residue chain is Cis-aconitate decarboxylase (481 aa).

Residues 462–481 are disordered; the sequence is SPPEVASNSPACNNSITNLS. Residues 467-481 are compositionally biased toward polar residues; that stretch reads ASNSPACNNSITNLS.

The protein belongs to the PrpD family. Homodimer. As to expression, expressed in LPS-tolerized macrophages (at protein level). Expressed in peripheral blood mononuclear cells (PBMCs), microglia and macrophage cells.

The protein resides in the mitochondrion. The enzyme catalyses cis-aconitate + H(+) = itaconate + CO2. Functionally, cis-aconitate decarboxylase that catalyzes production of itaconate and is involved in the inhibition of the inflammatory response. Acts as a negative regulator of the Toll-like receptors (TLRs)-mediated inflammatory innate response by stimulating the tumor necrosis factor alpha-induced protein TNFAIP3 expression via reactive oxygen species (ROS) in LPS-tolerized macrophages. Involved in antimicrobial response of innate immune cells; ACOD1-mediated itaconic acid production contributes to the antimicrobial activity of macrophages by generating itaconate, leading to alkylation of proteins, such as TFEB. Involved in antiviral response following infection by flavivirus in neurons: ACOD1-mediated itaconate production inhibits the activity of succinate dehydrogenase, generating a metabolic state in neurons that suppresses replication of viral genomes. Plays a role in the embryo implantation. This Homo sapiens (Human) protein is Cis-aconitate decarboxylase.